A 964-amino-acid chain; its full sequence is Myocardin-related transcription factor A (964 aa).

The tract at residues M1 to D291 is mediates interaction with SCAI and ACTB. Residues S15–K40 form an RPEL 1 repeat. A Phosphoserine modification is found at S41. The segment at S41–E58 is intervening spacer sequence 1. The RPEL 2 repeat unit spans residues D59–S84. A Bipartite Nuclear localization signal motif is present at residues K62–R100. The tract at residues A85–A102 is intervening spacer sequence 2. Residues D103–S128 form an RPEL 3 repeat. 2 disordered regions span residues A145 to S292 and L328 to S371. Residues S159, S174, and S191 each carry the phosphoserine modification. A compositionally biased stretch (polar residues) spans S186–S197. The segment covering P215 to P224 has biased composition (pro residues). The span at A251–P266 shows a compositional bias: basic and acidic residues. Positions G340–G365 are enriched in low complexity. S349 and S351 each carry phosphoserine. T352 carries the post-translational modification Phosphothreonine. S355 and S358 each carry phosphoserine. Phosphothreonine is present on T360. The residue at position 371 (S371) is a Phosphoserine. The SAP domain maps to L385–Q419. Phosphoserine occurs at positions 423 and 484. The tract at residues S484–S508 is disordered. T485 carries the post-translational modification Phosphothreonine. S487 carries the phosphoserine modification. Position 488 is a phosphothreonine (T488). S492 carries the phosphoserine modification. T494 is subject to Phosphothreonine. S496 carries the phosphoserine modification. A compositionally biased stretch (polar residues) spans E497–S508. Residues S520, S530, S544, and S548 each carry the phosphoserine modification. The stretch at R552–Q600 forms a coiled coil. A phosphoserine mark is found at S605, S606, S651, S687, S718, S724, and S728. The segment at T638–L673 is disordered. Disordered regions lie at residues N706 to Q779 and A796 to D849. Residues P715–G727 are compositionally biased toward low complexity. A compositionally biased stretch (polar residues) spans T764 to Q779. Residues A796 to S810 show a composition bias toward basic and acidic residues. Position 810 is a phosphoserine (S810). At T822 the chain carries Phosphothreonine. 2 positions are modified to phosphoserine: S826 and S840. T842 bears the Phosphothreonine mark. At S892 the chain carries Phosphoserine.

In terms of assembly, interacts with SRF, forming the SRF-MRTFA nuclear complex which binds the 5'-CArG-3' consensus motif (CArG box) on DNA via SRF. Interacts (via RPEL repeats) with globular actin (G-actin), thereby regulating its subcellular location and activity of the complex formed with SRF. Either forms a trivalent (by binding three G-actin monomers) or pentavalent (by binding five G-actin monomers) complex with G-actin. Forms a nuclear ternary complex with SCAI and SRF, leading to suppress MRTFA-induced SRF transcriptional activity. Interacts with beta-actin (ACTB); interaction with ACTB prevents interaction with SCAI. Interacts with MRTFB. In terms of processing, phosphorylation at Ser-41 by Erk inhibits binding of globular actin (G-actin), unmasking the nuclear localization signal (NLS) and promoting nuclear import. In terms of tissue distribution, expressed in heart, brain, spleen, lung, liver, muscle, kidney and testis.

The protein resides in the cytoplasm. It localises to the nucleus. Transcription coactivator that associates with the serum response factor (SRF) transcription factor to control expression of genes regulating the cytoskeleton during development, morphogenesis and cell migration. The SRF-MRTFA complex activity responds to Rho GTPase-induced changes in cellular globular actin (G-actin) concentration, thereby coupling cytoskeletal gene expression to cytoskeletal dynamics. MRTFA binds G-actin via its RPEL repeats, regulating activity of the MRTFA-SRF complex. Activity is also regulated by filamentous actin (F-actin) in the nucleus. This Mus musculus (Mouse) protein is Myocardin-related transcription factor A (Mrtfa).